The following is a 667-amino-acid chain: Probable oxidoreductase YyaE (667 aa).

Residues serine 2–aspartate 59 form the 4Fe-4S Mo/W bis-MGD-type domain. Residues cysteine 9, cysteine 13, cysteine 17, and cysteine 45 each coordinate [4Fe-4S] cluster.

The protein belongs to the prokaryotic molybdopterin-containing oxidoreductase family. Mo-bis(molybdopterin guanine dinucleotide) serves as cofactor.

In Bacillus subtilis (strain 168), this protein is Probable oxidoreductase YyaE (yyaE).